A 235-amino-acid chain; its full sequence is Protein GrpE (235 aa).

A compositionally biased stretch (polar residues) spans 1 to 18 (MTDGNQKPDGNSGEQVTV). Disordered regions lie at residues 1–50 (MTDG…DAAH) and 198–235 (ESVD…PSGS). Over residues 19 to 35 (TDKRRIDPETGEVRHVP) the composition is skewed to basic and acidic residues.

It belongs to the GrpE family. As to quaternary structure, homodimer.

It localises to the cytoplasm. In terms of biological role, participates actively in the response to hyperosmotic and heat shock by preventing the aggregation of stress-denatured proteins, in association with DnaK and GrpE. It is the nucleotide exchange factor for DnaK and may function as a thermosensor. Unfolded proteins bind initially to DnaJ; upon interaction with the DnaJ-bound protein, DnaK hydrolyzes its bound ATP, resulting in the formation of a stable complex. GrpE releases ADP from DnaK; ATP binding to DnaK triggers the release of the substrate protein, thus completing the reaction cycle. Several rounds of ATP-dependent interactions between DnaJ, DnaK and GrpE are required for fully efficient folding. The polypeptide is Protein GrpE (Mycobacterium bovis (strain BCG / Pasteur 1173P2)).